The following is a 394-amino-acid chain: NAD(P)H-quinone oxidoreductase subunit H (394 aa).

The protein belongs to the complex I 49 kDa subunit family. NDH-1 can be composed of about 15 different subunits; different subcomplexes with different compositions have been identified which probably have different functions.

The protein resides in the cellular thylakoid membrane. The catalysed reaction is a plastoquinone + NADH + (n+1) H(+)(in) = a plastoquinol + NAD(+) + n H(+)(out). It catalyses the reaction a plastoquinone + NADPH + (n+1) H(+)(in) = a plastoquinol + NADP(+) + n H(+)(out). NDH-1 shuttles electrons from an unknown electron donor, via FMN and iron-sulfur (Fe-S) centers, to quinones in the respiratory and/or the photosynthetic chain. The immediate electron acceptor for the enzyme in this species is believed to be plastoquinone. Couples the redox reaction to proton translocation, and thus conserves the redox energy in a proton gradient. Cyanobacterial NDH-1 also plays a role in inorganic carbon-concentration. The protein is NAD(P)H-quinone oxidoreductase subunit H of Nostoc punctiforme (strain ATCC 29133 / PCC 73102).